The chain runs to 315 residues: MSDVAEEKAEFLVIRTYGSESFRKECADLIEKELHKLNATIARVPVGEFVAYAENAVKNETDSEAVGSSSVKRENSANDSPANTNDVDIVSSPVKRGRGRKAKNPSADADVNDTGSSPVKKGRGRPIKNPSADAGSPLVKKGRGRRAQTPAADTDAIDTASSPVKKGRGRPAKNPSADAGSPLVKKGRGRQAKNLAADTDAIDTASSPVKKGRGRPLKKTAAEADVNGLGSPSANRITGCPPSTKVSNQSSPPEPAVNESEEADEPVLKRGRSVKQPKDESESDDEDAEKAPAAIPKKRGRPGKSAIDAFFDGSD.

The disordered stretch occupies residues 57-315 (VKNETDSEAV…AIDAFFDGSD (259 aa)). Over residues 77–86 (ANDSPANTND) the composition is skewed to polar residues. The segment at residues 118–128 (PVKKGRGRPIK) is a DNA-binding region (a.T hook 1). 2 stretches are compositionally biased toward low complexity: residues 147–160 (AQTP…IDTA) and 196–205 (AADTDAIDTA).

This sequence belongs to the HMGA family.

The protein localises to the nucleus. Functionally, transcriptional regulator. Binds to specific sequence motifs in regulatory elements. May recruit transcription factors, or may induce structural changes in chromatin, to thereby modulate embryonic expression of ATP-dependent chaperone cdc-48.1. The sequence is that of High mobility group protein hmg-12 from Caenorhabditis elegans.